We begin with the raw amino-acid sequence, 177 residues long: ATP-dependent protease subunit HslV (177 aa).

Residue Thr6 is part of the active site. Residues Gly161, Cys164, and Thr167 each coordinate Na(+).

Belongs to the peptidase T1B family. HslV subfamily. As to quaternary structure, a double ring-shaped homohexamer of HslV is capped on each side by a ring-shaped HslU homohexamer. The assembly of the HslU/HslV complex is dependent on binding of ATP.

The protein resides in the cytoplasm. The enzyme catalyses ATP-dependent cleavage of peptide bonds with broad specificity.. Allosterically activated by HslU binding. Its function is as follows. Protease subunit of a proteasome-like degradation complex believed to be a general protein degrading machinery. The chain is ATP-dependent protease subunit HslV from Petrotoga mobilis (strain DSM 10674 / SJ95).